A 101-amino-acid polypeptide reads, in one-letter code: Small ribosomal subunit protein uS17 (101 aa).

This sequence belongs to the universal ribosomal protein uS17 family. As to quaternary structure, part of the 30S ribosomal subunit.

Functionally, one of the primary rRNA binding proteins, it binds specifically to the 5'-end of 16S ribosomal RNA. In Kosmotoga olearia (strain ATCC BAA-1733 / DSM 21960 / TBF 19.5.1), this protein is Small ribosomal subunit protein uS17.